Here is a 397-residue protein sequence, read N- to C-terminus: Methylthioribose kinase (397 aa).

Residues Asn43, Lys60, and 114–116 each bind ATP; that span reads EDL. A substrate-binding site is contributed by Asp232. Residue 249 to 251 coordinates ATP; sequence DPE. Arg340 contributes to the substrate binding site.

This sequence belongs to the methylthioribose kinase family. As to quaternary structure, homodimer.

It carries out the reaction 5-(methylsulfanyl)-D-ribose + ATP = 5-(methylsulfanyl)-alpha-D-ribose 1-phosphate + ADP + H(+). It functions in the pathway amino-acid biosynthesis; L-methionine biosynthesis via salvage pathway; S-methyl-5-thio-alpha-D-ribose 1-phosphate from S-methyl-5'-thioadenosine (hydrolase route): step 2/2. Its function is as follows. Catalyzes the phosphorylation of methylthioribose into methylthioribose-1-phosphate. The sequence is that of Methylthioribose kinase from Bacillus pumilus (strain SAFR-032).